A 504-amino-acid polypeptide reads, in one-letter code: Light-independent protochlorophyllide reductase subunit B (504 aa).

D36 provides a ligand contact to [4Fe-4S] cluster. The Proton donor role is filled by D279. 414–415 is a binding site for substrate; that stretch reads GL.

Belongs to the ChlB/BchB/BchZ family. Protochlorophyllide reductase is composed of three subunits; BchL, BchN and BchB. Forms a heterotetramer of two BchB and two BchN subunits. [4Fe-4S] cluster serves as cofactor.

It catalyses the reaction chlorophyllide a + oxidized 2[4Fe-4S]-[ferredoxin] + 2 ADP + 2 phosphate = protochlorophyllide a + reduced 2[4Fe-4S]-[ferredoxin] + 2 ATP + 2 H2O. It participates in porphyrin-containing compound metabolism; bacteriochlorophyll biosynthesis (light-independent). Component of the dark-operative protochlorophyllide reductase (DPOR) that uses Mg-ATP and reduced ferredoxin to reduce ring D of protochlorophyllide (Pchlide) to form chlorophyllide a (Chlide). This reaction is light-independent. The NB-protein (BchN-BchB) is the catalytic component of the complex. The protein is Light-independent protochlorophyllide reductase subunit B of Acidiphilium rubrum.